Reading from the N-terminus, the 188-residue chain is Elongation factor P (188 aa).

Belongs to the elongation factor P family.

The protein resides in the cytoplasm. Its pathway is protein biosynthesis; polypeptide chain elongation. Its function is as follows. Involved in peptide bond synthesis. Stimulates efficient translation and peptide-bond synthesis on native or reconstituted 70S ribosomes in vitro. Probably functions indirectly by altering the affinity of the ribosome for aminoacyl-tRNA, thus increasing their reactivity as acceptors for peptidyl transferase. The polypeptide is Elongation factor P (Chlorobium phaeobacteroides (strain DSM 266 / SMG 266 / 2430)).